We begin with the raw amino-acid sequence, 406 residues long: E3 ubiquitin-protein ligase RING1 (406 aa).

Residue T24 is modified to Phosphothreonine. The interval 30 to 234 (MDGTEIAVSP…GGAGSEDSGD (205 aa)) is necessary for transcriptional repression. At S38 the chain carries Phosphoserine. The RING-type zinc-finger motif lies at 48–88 (CPICLDMLKNTMTTKECLHRFCSDCIVTALRSGNKECPTCR). 3 positions are modified to phosphoserine: S140, S187, and S190. Disordered regions lie at residues 148 to 263 (QAMH…GEIE) and 309 to 354 (QQQE…PSLE). Over residues 175–187 (EPGEGEGDGEDVS) the composition is skewed to acidic residues. The Nuclear localization signal signature appears at 201–204 (KRPR). Residues 205–228 (GGGAGGSSVGTGGGGTGGVGGGAG) are compositionally biased toward gly residues. 2 positions are modified to phosphothreonine: T215 and T220. S229 and S232 each carry phosphoserine. The interval 230–406 (EDSGDRGGTL…LCYAPTKDPK (177 aa)) is necessary for interaction with CBX2. A compositionally biased stretch (gly residues) spans 235–244 (RGGTLGGGTL). Residues 246–258 (PPSPPGAPSPPEP) are compositionally biased toward pro residues. S248 and S254 each carry phosphoserine. The span at 315–343 (EPGGPGGGASDTGGPDGCGGEGGGAGGGD) shows a compositional bias: gly residues.

Component of chromatin-associated Polycomb (PcG) complexes. Interacts with BMI1. Part of the E2F6.com-1 complex in G0 phase composed of E2F6, MGA, MAX, TFDP1, CBX3, BAT8, EUHMTASE1, RING1, RNF2/RING2 MBLR, L3MBTL2 and YAF2. Interacts with CBX2 and PCGF6. Component of a PRC1-like complex. Component of repressive BCOR complex containing Polycomb group subcomplex at least composed of RYBP, PCGF1, BCOR and RNF2/RING2. Interacts with PCGF2, RNF2; CBX6, CBX7 and CBX8. Interacts with PHC2. Interacts with MN1. Interacts with USP26.

It localises to the nucleus. The protein localises to the nucleus speckle. The enzyme catalyses S-ubiquitinyl-[E2 ubiquitin-conjugating enzyme]-L-cysteine + [acceptor protein]-L-lysine = [E2 ubiquitin-conjugating enzyme]-L-cysteine + N(6)-ubiquitinyl-[acceptor protein]-L-lysine.. Its pathway is protein modification; protein ubiquitination. Functionally, constitutes one of the E3 ubiquitin-protein ligases that mediate monoubiquitination of 'Lys-119' of histone H2A, thereby playing a central role in histone code and gene regulation. H2A 'Lys-119' ubiquitination gives a specific tag for epigenetic transcriptional repression and participates in X chromosome inactivation of female mammals. Essential component of a Polycomb group (PcG) multiprotein PRC1-like complex, a complex class required to maintain the transcriptionally repressive state of many genes, including Hox genes, throughout development. PcG PRC1 complex acts via chromatin remodeling and modification of histones, rendering chromatin heritably changed in its expressibility. Compared to RNF2/RING2, it does not have the main E3 ubiquitin ligase activity on histone H2A, and it may rather act as a modulator of RNF2/RING2 activity. This Homo sapiens (Human) protein is E3 ubiquitin-protein ligase RING1.